The following is a 676-amino-acid chain: UvrABC system protein B (676 aa).

A Helicase ATP-binding domain is found at 35–192 (QGVADGLMYQ…ARLVAMQYTR (158 aa)). 48–55 (GVTGSGKT) contributes to the ATP binding site. Residues 101–124 (YYDYYQPEAYVPTRDLFIEKDSSV) carry the Beta-hairpin motif. The region spanning 439 to 605 (QVDDLLGEIR…GVNKAVRELI (167 aa)) is the Helicase C-terminal domain. A UVR domain is found at 634–669 (AREIKRLEKLMMDHARNLEFEQAAAARDALTALKNR).

Belongs to the UvrB family. As to quaternary structure, forms a heterotetramer with UvrA during the search for lesions. Interacts with UvrC in an incision complex.

The protein resides in the cytoplasm. Functionally, the UvrABC repair system catalyzes the recognition and processing of DNA lesions. A damage recognition complex composed of 2 UvrA and 2 UvrB subunits scans DNA for abnormalities. Upon binding of the UvrA(2)B(2) complex to a putative damaged site, the DNA wraps around one UvrB monomer. DNA wrap is dependent on ATP binding by UvrB and probably causes local melting of the DNA helix, facilitating insertion of UvrB beta-hairpin between the DNA strands. Then UvrB probes one DNA strand for the presence of a lesion. If a lesion is found the UvrA subunits dissociate and the UvrB-DNA preincision complex is formed. This complex is subsequently bound by UvrC and the second UvrB is released. If no lesion is found, the DNA wraps around the other UvrB subunit that will check the other stand for damage. This chain is UvrABC system protein B, found in Bordetella avium (strain 197N).